A 315-amino-acid polypeptide reads, in one-letter code: Probable cytosolic iron-sulfur protein assembly protein CIAO1 homolog (315 aa).

WD repeat units lie at residues 11-50 (GHED…WVCK), 56-95 (GHQR…FESC), 100-139 (GHEN…EFEC), 145-188 (CHSQ…CTLD), 189-229 (KHAS…RSWE), 236-275 (RHPR…CSWR), and 283-315 (AHSQ…WQID).

It belongs to the WD repeat CIA1 family.

Essential component of the cytosolic iron-sulfur (Fe/S) protein assembly machinery. Required for the maturation of extramitochondrial Fe/S proteins. This is Probable cytosolic iron-sulfur protein assembly protein CIAO1 homolog from Ixodes scapularis (Black-legged tick).